The primary structure comprises 242 residues: Segregation and condensation protein A (242 aa).

Belongs to the ScpA family. As to quaternary structure, component of a cohesin-like complex composed of ScpA, ScpB and the Smc homodimer, in which ScpA and ScpB bind to the head domain of Smc. The presence of the three proteins is required for the association of the complex with DNA.

It is found in the cytoplasm. Its function is as follows. Participates in chromosomal partition during cell division. May act via the formation of a condensin-like complex containing Smc and ScpB that pull DNA away from mid-cell into both cell halves. This is Segregation and condensation protein A from Streptococcus pneumoniae serotype 4 (strain ATCC BAA-334 / TIGR4).